A 387-amino-acid chain; its full sequence is Probable peptidoglycan glycosyltransferase FtsW (387 aa).

Transmembrane regions (helical) follow at residues 19-39 (LDFSLYATVAILISVGIVMVA), 61-81 (ITFLAMGLVGGLVILAVPMSV), 86-106 (SGLLLILAFFLLMAVLIPGIG), 118-138 (LGPFSMQASEIAKFCLIVYFA), 161-181 (VLLIIVLLLLLEPDFGSSVVI), 199-219 (FLLLAVSGVAGLALMAVASPY), 286-306 (FIGAIALIGVFGFFLYRLVIL), 320-340 (YVVFGIGVMLAMQAFINMGVA), and 352-372 (PFISYGGSSLLITCGLMALVF).

This sequence belongs to the SEDS family. FtsW subfamily.

The protein localises to the cell inner membrane. It catalyses the reaction [GlcNAc-(1-&gt;4)-Mur2Ac(oyl-L-Ala-gamma-D-Glu-L-Lys-D-Ala-D-Ala)](n)-di-trans,octa-cis-undecaprenyl diphosphate + beta-D-GlcNAc-(1-&gt;4)-Mur2Ac(oyl-L-Ala-gamma-D-Glu-L-Lys-D-Ala-D-Ala)-di-trans,octa-cis-undecaprenyl diphosphate = [GlcNAc-(1-&gt;4)-Mur2Ac(oyl-L-Ala-gamma-D-Glu-L-Lys-D-Ala-D-Ala)](n+1)-di-trans,octa-cis-undecaprenyl diphosphate + di-trans,octa-cis-undecaprenyl diphosphate + H(+). The protein operates within cell wall biogenesis; peptidoglycan biosynthesis. Its function is as follows. Peptidoglycan polymerase that is essential for cell division. The polypeptide is Probable peptidoglycan glycosyltransferase FtsW (Saccharophagus degradans (strain 2-40 / ATCC 43961 / DSM 17024)).